Reading from the N-terminus, the 682-residue chain is tRNA(Met) cytidine acetyltransferase TmcA (682 aa).

ATP is bound by residues Gln-176, Gly-198–Met-207, and Arg-320. The 178-residue stretch at Gln-357 to Phe-534 folds into the N-acetyltransferase domain. Acetyl-CoA contacts are provided by residues Val-462 to Val-464 and Glu-502.

The protein belongs to the RNA cytidine acetyltransferase family. TmcA subfamily.

Its subcellular location is the cytoplasm. It carries out the reaction cytidine(34) in elongator tRNA(Met) + acetyl-CoA + ATP + H2O = N(4)-acetylcytidine(34) in elongator tRNA(Met) + ADP + phosphate + CoA + H(+). Catalyzes the formation of N(4)-acetylcytidine (ac(4)C) at the wobble position of tRNA(Met), by using acetyl-CoA as an acetyl donor and ATP (or GTP). This is tRNA(Met) cytidine acetyltransferase TmcA from Photorhabdus asymbiotica subsp. asymbiotica (strain ATCC 43949 / 3105-77) (Xenorhabdus luminescens (strain 2)).